Consider the following 61-residue polypeptide: Large ribosomal subunit protein bL32 (61 aa).

Positions 1 to 16 are enriched in basic residues; it reads MAVPKRKTSPSRRGMR. The segment at 1 to 61 is disordered; sequence MAVPKRKTSP…RQILKPKAEA (61 aa). The segment covering 28-44 has biased composition (basic and acidic residues); sequence VEDKDSGELRRPHHLDL.

The protein belongs to the bacterial ribosomal protein bL32 family.

This is Large ribosomal subunit protein bL32 from Xanthobacter autotrophicus (strain ATCC BAA-1158 / Py2).